Consider the following 185-residue polypeptide: GTP cyclohydrolase 1 (185 aa).

Residues cysteine 75, histidine 78, and cysteine 146 each contribute to the Zn(2+) site.

Belongs to the GTP cyclohydrolase I family. Toroid-shaped homodecamer, composed of two pentamers of five dimers.

It carries out the reaction GTP + H2O = 7,8-dihydroneopterin 3'-triphosphate + formate + H(+). It participates in cofactor biosynthesis; 7,8-dihydroneopterin triphosphate biosynthesis; 7,8-dihydroneopterin triphosphate from GTP: step 1/1. The protein is GTP cyclohydrolase 1 of Alkalilimnicola ehrlichii (strain ATCC BAA-1101 / DSM 17681 / MLHE-1).